The chain runs to 384 residues: Na(+)/H(+) antiporter NhaA (384 aa).

11 helical membrane passes run 17–37, 53–73, 89–109, 118–138, 147–167, 171–191, 198–218, 251–271, 283–303, 321–341, and 354–374; these read SGLFLISCTLFSLVIANSAIA, LEYWINDGLMTIFFLLIGLEL, MLPIFGAIGGMIVPAGLFLVM, GAGIPMATDIAFALAILSLLG, IFLTALAVIDDLGAILIIAVF, TLLWTNLCIALGIFGFLLILN, LIPYLIGGVFMWYFMLHSGVH, PVAFFILPLFALANTAIVLSS, IGIALGLIIGKPLGIFLLSML, ILAVGFLGGIGFTMSIFITLL, and FVILISSLIAGIIGYFSLKYV.

It belongs to the NhaA Na(+)/H(+) (TC 2.A.33) antiporter family.

The protein resides in the cell inner membrane. The enzyme catalyses Na(+)(in) + 2 H(+)(out) = Na(+)(out) + 2 H(+)(in). Na(+)/H(+) antiporter that extrudes sodium in exchange for external protons. This Flavobacterium psychrophilum (strain ATCC 49511 / DSM 21280 / CIP 103535 / JIP02/86) protein is Na(+)/H(+) antiporter NhaA.